Reading from the N-terminus, the 679-residue chain is Glycine--tRNA ligase beta subunit (679 aa).

This sequence belongs to the class-II aminoacyl-tRNA synthetase family. Tetramer of two alpha and two beta subunits.

Its subcellular location is the cytoplasm. The enzyme catalyses tRNA(Gly) + glycine + ATP = glycyl-tRNA(Gly) + AMP + diphosphate. This is Glycine--tRNA ligase beta subunit from Streptococcus pyogenes serotype M28 (strain MGAS6180).